Here is a 209-residue protein sequence, read N- to C-terminus: Small ribosomal subunit protein uS3 (209 aa).

Residues 38 to 107 form the KH type-2 domain; it reads IRNFIKKNYN…KFGIDIIELK (70 aa).

The protein belongs to the universal ribosomal protein uS3 family. As to quaternary structure, part of the 30S ribosomal subunit. Forms a tight complex with proteins S10 and S14.

Binds the lower part of the 30S subunit head. Binds mRNA in the 70S ribosome, positioning it for translation. This chain is Small ribosomal subunit protein uS3, found in Fervidobacterium nodosum (strain ATCC 35602 / DSM 5306 / Rt17-B1).